The chain runs to 323 residues: Prostaglandin F synthase 2 (323 aa).

NADP(+)-binding positions include 20-24 (GFGTY) and aspartate 50. Tyrosine 55 functions as the Proton donor in the catalytic mechanism. Histidine 117 serves as a coordination point for substrate. NADP(+) contacts are provided by residues 166–167 (SN), glutamine 190, 216–221 (YAALGA), and 270–280 (KSFNKKRIKEN).

The protein belongs to the aldo/keto reductase family. As to quaternary structure, monomer.

Its subcellular location is the cytoplasm. The enzyme catalyses prostaglandin F2alpha + NADP(+) = prostaglandin D2 + NADPH + H(+). The protein operates within lipid metabolism; prostaglandin biosynthesis. Catalyzes the reduction of PGD(2) and PGH(2) to PGF(2 alpha) and a stereoisomer, respectively. It has a broad substrate specificity and also reduces other carbonyl compounds. The chain is Prostaglandin F synthase 2 from Bos taurus (Bovine).